A 541-amino-acid polypeptide reads, in one-letter code: Tyrosine-protein kinase Yes (541 aa).

Gly2 carries N-myristoyl glycine lipidation. Residue Cys3 is the site of S-palmitoyl cysteine; in membrane form attachment. Phosphotyrosine is present on Tyr32. Residues 89 to 150 (GGVTIFVALY…PSNYVVPADS (62 aa)) form the SH3 domain. Positions 156 to 253 (WYFGKMGRKD…GLCHKLTTVC (98 aa)) constitute an SH2 domain. One can recognise a Protein kinase domain in the interval 275-528 (LRLEVKLGQG…YIQSFLEDYF (254 aa)). ATP-binding positions include 281–289 (LGQGCFGEV) and Lys303. A phosphotyrosine mark is found at Tyr334 and Tyr343. Asp394 functions as the Proton acceptor in the catalytic mechanism. Phosphotyrosine; by autocatalysis is present on Tyr424. The residue at position 535 (Tyr535) is a Phosphotyrosine.

It belongs to the protein kinase superfamily. Tyr protein kinase family. SRC subfamily. Interacts with YAP1. Interacts with FASLG. Interacts with CTNND1; this interaction allows YES1-mediated activation of FYN and FER and subsequent phosphorylation of CTNND1. Interacts with CSF1R. Interacts with IL6ST/gp130. Interacts with SCRIB, when YES1 is in a closed conformation; the interaction facilitates YES1 autophosphorylation. In terms of processing, phosphorylated. Phosphorylation by CSK on the C-terminal tail maintains the enzyme in an inactive state. Autophosphorylation at Tyr-424 maintains enzyme activity by blocking CSK-mediated inhibition. Palmitoylation at Cys-3 promotes membrane localization.

It is found in the cell membrane. It localises to the cytoplasm. Its subcellular location is the cytoskeleton. The protein resides in the microtubule organizing center. The protein localises to the centrosome. It is found in the cytosol. It localises to the cell junction. The catalysed reaction is L-tyrosyl-[protein] + ATP = O-phospho-L-tyrosyl-[protein] + ADP + H(+). Functionally, non-receptor protein tyrosine kinase that is involved in the regulation of cell growth and survival, apoptosis, cell-cell adhesion, cytoskeleton remodeling, and differentiation. Stimulation by receptor tyrosine kinases (RTKs) including EGFR, PDGFR, CSF1R and FGFR leads to recruitment of YES1 to the phosphorylated receptor, and activation and phosphorylation of downstream substrates. Upon EGFR activation, promotes the phosphorylation of PARD3 to favor epithelial tight junction assembly. Participates in the phosphorylation of specific junctional components such as CTNND1 by stimulating the FYN and FER tyrosine kinases at cell-cell contacts. Upon T-cell stimulation by CXCL12, phosphorylates collapsin response mediator protein 2/DPYSL2 and induces T-cell migration. Participates in CD95L/FASLG signaling pathway and mediates AKT-mediated cell migration. Plays a role in cell cycle progression by phosphorylating the cyclin dependent kinase 4/CDK4 thus regulating the G1 phase. Also involved in G2/M progression and cytokinesis. Catalyzes phosphorylation of organic cation transporter OCT2 which induces its transport activity. This Mus musculus (Mouse) protein is Tyrosine-protein kinase Yes (Yes1).